Reading from the N-terminus, the 191-residue chain is Small ribosomal subunit protein uS11m (191 aa).

The segment at 37–62 (PRLEDSAARQNTEREAAPSRFSLYPP) is disordered. Residues 38–53 (RLEDSAARQNTEREAA) are compositionally biased toward basic and acidic residues.

Belongs to the universal ribosomal protein uS11 family. In terms of assembly, component of the mitochondrial ribosome small subunit (28S) which comprises a 12S rRNA and about 30 distinct proteins.

The protein localises to the mitochondrion. This chain is Small ribosomal subunit protein uS11m (Mrps11), found in Mus musculus (Mouse).